The chain runs to 379 residues: Cobalt-precorrin-5B C(1)-methyltransferase (379 aa).

This sequence belongs to the CbiD family.

It catalyses the reaction Co-precorrin-5B + S-adenosyl-L-methionine = Co-precorrin-6A + S-adenosyl-L-homocysteine. It participates in cofactor biosynthesis; adenosylcobalamin biosynthesis; cob(II)yrinate a,c-diamide from sirohydrochlorin (anaerobic route): step 6/10. Catalyzes the methylation of C-1 in cobalt-precorrin-5B to form cobalt-precorrin-6A. This Salmonella choleraesuis (strain SC-B67) protein is Cobalt-precorrin-5B C(1)-methyltransferase.